The primary structure comprises 582 residues: Hydrazine dehydrogenase (582 aa).

Residues 1–32 form the signal peptide; the sequence is MRKFLKVTLASALIGCGVIGTVSSLMVKEAKA. Heme c is bound by residues cysteine 121, cysteine 124, histidine 125, histidine 141, cysteine 151, cysteine 154, histidine 155, histidine 159, cysteine 170, cysteine 175, histidine 176, histidine 191, cysteine 216, cysteine 219, histidine 220, cysteine 227, cysteine 230, histidine 231, histidine 234, cysteine 247, cysteine 250, histidine 251, histidine 267, cysteine 297, cysteine 300, histidine 301, histidine 306, cysteine 342, cysteine 345, histidine 346, histidine 454, and tyrosine 462. The tract at residues 561 to 582 is disordered; that stretch reads GSHSAHHHESGHDPAARSMKEH. Over residues 567 to 582 the composition is skewed to basic and acidic residues; that stretch reads HHESGHDPAARSMKEH.

In terms of assembly, homotrimer; subunits are linked by two covalent bonds between Tyr-462 of one subunit and heme P460 of an adjacent subunit. May form 24-mer of an octamer of trimers. Requires heme c as cofactor.

The protein localises to the anammoxosome. The catalysed reaction is hydrazine + 4 Fe(III)-[cytochrome c] = N2 + 4 Fe(II)-[cytochrome c] + 4 H(+). It functions in the pathway nitrogen metabolism. Is strongly and competitively inhibited by NO and hydroxylamine. Catalyzes the four-electron oxidation of hydrazine to N2. The electrons derived from hydrazine oxidation may be transferred to the quinone pool and exploited to promote the generation of proton-motive force (pmf) across the anammoxosome membrane. Is involved in anaerobic ammonium oxidation (anammox), a biological process in which nitrite is used as the electron acceptor in the conversion of ammonium to dinitrogen gas (N2) and water; this bacterial process has a major role in the Earth's nitrogen cycle and has been estimated to synthesize up to 50% of the dinitrogen gas emitted into our atmosphere from the oceans. Cannot oxidize hydroxylamine to NO. The sequence is that of Hydrazine dehydrogenase from Kuenenia stuttgartiensis.